The chain runs to 333 residues: Ribosomal RNA small subunit methyltransferase H (333 aa).

S-adenosyl-L-methionine is bound by residues 42–44 (GGH), Asp62, Phe86, Asp105, and Gln112.

The protein belongs to the methyltransferase superfamily. RsmH family.

Its subcellular location is the cytoplasm. It carries out the reaction cytidine(1402) in 16S rRNA + S-adenosyl-L-methionine = N(4)-methylcytidine(1402) in 16S rRNA + S-adenosyl-L-homocysteine + H(+). Its function is as follows. Specifically methylates the N4 position of cytidine in position 1402 (C1402) of 16S rRNA. The sequence is that of Ribosomal RNA small subunit methyltransferase H from Cupriavidus necator (strain ATCC 17699 / DSM 428 / KCTC 22496 / NCIMB 10442 / H16 / Stanier 337) (Ralstonia eutropha).